A 183-amino-acid chain; its full sequence is Ribosome rescue factor SmrB (183 aa).

The Smr domain occupies 98-173; it reads LDLHGLTQLQ…GDAALLVLIE (76 aa).

It belongs to the SmrB family. In terms of assembly, associates with collided ribosomes, but not with correctly translating polysomes.

In terms of biological role, acts as a ribosome collision sensor. Detects stalled/collided disomes (pairs of ribosomes where the leading ribosome is stalled and a second ribosome has collided with it) and endonucleolytically cleaves mRNA at the 5' boundary of the stalled ribosome. Stalled/collided disomes form a new interface (primarily via the 30S subunits) that binds SmrB. Cleaved mRNA becomes available for tmRNA ligation, leading to ribosomal subunit dissociation and rescue of stalled ribosomes. This is Ribosome rescue factor SmrB from Shigella boydii serotype 18 (strain CDC 3083-94 / BS512).